Here is a 989-residue protein sequence, read N- to C-terminus: Frequency clock protein (989 aa).

Disordered stretches follow at residues 1–139 (MADS…PGFR), 208–290 (FAAS…VGTQ), and 331–445 (ISGR…PDRV). The segment covering 36 to 45 (ENHRLARDTS) has biased composition (basic and acidic residues). Residues 46–88 (SRVTSSSALGVTESQPQLKSSPTRRNSSGESEPTNWFNQSNRN) are compositionally biased toward polar residues. Basic and acidic residues predominate over residues 109–119 (KETDSSNEESR). The span at 233-255 (HSSGVSLSKHDSSSSSRSRPVDS) shows a compositional bias: low complexity. 2 stretches are compositionally biased toward polar residues: residues 256 to 274 (AYNS…SSGP) and 334 to 343 (RNMQRNQSMP). A compositionally biased stretch (basic and acidic residues) spans 377–386 (DNPRKNRSSK). Polar residues predominate over residues 387-397 (DNGSASNSGGD). The span at 402–418 (GGTGTGSGDGSGSGGRT) shows a compositional bias: gly residues. The segment covering 433 to 444 (RPTRPRDLDPDR) has biased composition (basic and acidic residues). Thr501 carries the phosphothreonine modification. 2 positions are modified to phosphoserine: Ser513 and Ser519. Disordered stretches follow at residues 524–642 (KIRW…QRRK), 865–907 (WDDG…TYMR), and 968–989 (SVAT…VSSS). The Nuclear localization signal motif lies at 564–568 (RKKRK). Positions 598-615 (RNSSSIETSLEESMSQGS) are enriched in polar residues. Over residues 865–886 (WDDGDDLASDDEEVEEVEEDSY) the composition is skewed to acidic residues. The span at 978–989 (GYSSSMEDVSSS) shows a compositional bias: polar residues.

Belongs to the FRQ family. Progressive phosphorylation during the late circadian day and early night. Phosphorylation is also involved in regulating frq degradation. Phosphorylation by CKII may have at least three functions; it decreases the stability of frq, reduces the protein complex formation between frq and the white collar proteins, and is important for the closing of the Neurospora circadian negative feedback loop.

The protein localises to the nucleus. Circadian clock component involved in the generation of biological rhythms, in particular in rhythm stability, period length, and temperature compensation. Oscillates in abundance with a daily peak early in the morning. Behaves as a negative element in circadian transcriptional loop. May bind to wc-2 protein. The complex frq-wc-2 may turn off the expression of frq. The polypeptide is Frequency clock protein (frq) (Neurospora crassa (strain ATCC 24698 / 74-OR23-1A / CBS 708.71 / DSM 1257 / FGSC 987)).